The following is a 764-amino-acid chain: 5-methyltetrahydropteroyltriglutamate--homocysteine methyltransferase (764 aa).

Residues 16–19 (RELK) and K121 each bind 5-methyltetrahydropteroyltri-L-glutamate. Residues 440–442 (IGS) and E493 contribute to the L-homocysteine site. L-methionine is bound by residues 440–442 (IGS) and E493. 5-methyltetrahydropteroyltri-L-glutamate-binding positions include 524-525 (RC) and W570. D608 serves as a coordination point for L-homocysteine. Residue D608 participates in L-methionine binding. E614 contributes to the 5-methyltetrahydropteroyltri-L-glutamate binding site. 3 residues coordinate Zn(2+): H650, C652, and E674. H703 functions as the Proton donor in the catalytic mechanism. C735 serves as a coordination point for Zn(2+).

It belongs to the vitamin-B12 independent methionine synthase family. The cofactor is Zn(2+).

The catalysed reaction is 5-methyltetrahydropteroyltri-L-glutamate + L-homocysteine = tetrahydropteroyltri-L-glutamate + L-methionine. It functions in the pathway amino-acid biosynthesis; L-methionine biosynthesis via de novo pathway; L-methionine from L-homocysteine (MetE route): step 1/1. Functionally, catalyzes the transfer of a methyl group from 5-methyltetrahydrofolate to homocysteine resulting in methionine formation. The protein is 5-methyltetrahydropteroyltriglutamate--homocysteine methyltransferase of Burkholderia ambifaria (strain MC40-6).